An 809-amino-acid chain; its full sequence is Chloride channel protein F (809 aa).

The Cytoplasmic segment spans residues 1 to 65 (MSTSKYSKMI…SWAKFARLNN (65 aa)). Helical transmembrane passes span 66–86 (FYIW…LVAV), 110–130 (LQYL…CFII), 152–172 (FWNP…GLLL), 218–238 (AACC…GVLF), 246–266 (FYLI…AVGI), 295–315 (LIAF…FISL), 333–353 (ITPF…SFPL), 395–415 (GIIL…AVSI), 425–445 (IPLF…MLVL), 459–479 (VVGA…AMII), and 486–506 (LTYM…GNLL). The CBS 1 domain occupies 539-597 (MKRDLYYVCQNTTLSQISNLLKRVDEHSIPVVSSDNDLQLIGTISTTTLEEVIAYHERL). 2 disordered regions span residues 604 to 646 (PLSL…NNQN) and 692 to 729 (NNNF…NNNS). A compositionally biased stretch (low complexity) spans 620–646 (NDNINNNQNNNNNNNNNNNNNNSNNQN). In terms of domain architecture, CBS 2 spans 756–809 (IDSSPFQIQETMPVRKIVFMFMMLGGNILYVTNKGKLTGVVAKTELVHQNNNKH).

This sequence belongs to the chloride channel (TC 2.A.49) family.

It is found in the membrane. Its function is as follows. Voltage-gated chloride channel. Chloride channels may have several functions including the regulation of cell volume, membrane potential stabilization and signal transduction. This chain is Chloride channel protein F (clcF), found in Dictyostelium discoideum (Social amoeba).